We begin with the raw amino-acid sequence, 620 residues long: Guanylate cyclase soluble subunit beta-1 (620 aa).

Residue H105 coordinates heme. The region spanning 421-554 (TILFSGIVGF…NTVNLTSRTE (134 aa)) is the Guanylate cyclase domain.

It belongs to the adenylyl cyclase class-4/guanylyl cyclase family. As to quaternary structure, the active enzyme is formed by a heterodimer of an alpha and a beta subunit. Heterodimer with GUCY1A1. Can also form inactive homodimers in vitro. Heme is required as a cofactor.

It localises to the cytoplasm. It carries out the reaction GTP = 3',5'-cyclic GMP + diphosphate. With respect to regulation, activated by nitric oxide in the presence of magnesium or manganese ions. In terms of biological role, mediates responses to nitric oxide (NO) by catalyzing the biosynthesis of the signaling molecule cGMP. The protein is Guanylate cyclase soluble subunit beta-1 (Gucy1b1) of Mus musculus (Mouse).